A 506-amino-acid polypeptide reads, in one-letter code: F-box protein At4g02760 (506 aa).

Residues 115-161 (TSWPLLPELTIKVFSMLDTKSLMQASACCTMFNKCAMDRVCYSHIDL) enclose the F-box domain. Residues 452–506 (TFVAEFRSPSPSESDVRSPSPSSSSDSSSSSDSSSSSSSGESSDESGTEEEEDED) form a disordered region. A compositionally biased stretch (low complexity) spans 459–492 (SPSPSESDVRSPSPSSSSDSSSSSDSSSSSSSGE). Acidic residues predominate over residues 493–506 (SSDESGTEEEEDED).

The protein is F-box protein At4g02760 of Arabidopsis thaliana (Mouse-ear cress).